We begin with the raw amino-acid sequence, 157 residues long: AM-toxin biosynthesis protein 15 (157 aa).

Residues 17–43 form a disordered region; it reads RARHWDSKQGSSNSDVASGGSEVAGNS.

Its pathway is mycotoxin biosynthesis. Functionally, part of the gene clusters that mediate the biosynthesis of AM-toxins, host-selective toxins (HSTs) causing Alternaria blotch on apple, a worldwide distributed disease. AM-toxins are cyclic depsipeptides containing the 3 residues 2-hydroxy-isovaleric acid (2-HIV), dehydroalanine, L-alanine which are common for all 3 AM-toxins I to III. The fourth precursor is L-alpha-amino-methoxyphenyl-valeric acid (L-Amv) for AM-toxin I, L-alpha-amino-phenyl-valeric acid (L-Apv) for AM-toxin II, and L-alpha-amino-hydroxyphenyl-valeric acid (L-Ahv) for AM-toxin III. AM-toxins have two target sites for affecting susceptible apple cells; they cause invagination of the plasma membrane and electrolyte loss and chloroplast disorganization. The non-ribosomal peptide synthetase AMT1 contains 4 catalytic modules and is responsible for activation of each residue in AM-toxin. The aldo-keto reductase AMT2 catalyzes the conversion of 2-keto-isovaleric acid (2-KIV) to 2-hydroxy-isovaleric acid (2-HIV), one of the precursor residues incorporated by AMT1 during AM-toxin biosynthesis, by reduction of its ketone to an alcohol. The cytochrome P450 monooxygenase AMT3 and the thioesterase AMT4 are also important for AM-toxin production, but their exact function within the AM-toxin biosynthesis are not known yet. Up to 21 proteins (including AMT1 to AMT4) are predicted to be involved in AM-toxin biosynthesis since their expression ishighly up-regulated in AM-toxin-producing cultures. The sequence is that of AM-toxin biosynthesis protein 15 from Alternaria alternata (Alternaria rot fungus).